Reading from the N-terminus, the 1178-residue chain is DNA-directed RNA polymerase subunit beta' (1178 aa).

Residues Cys60, Cys62, Cys75, and Cys78 each coordinate Zn(2+). Positions 450, 452, and 454 each coordinate Mg(2+). Positions 795, 869, 876, and 879 each coordinate Zn(2+).

It belongs to the RNA polymerase beta' chain family. The RNAP catalytic core consists of 2 alpha, 1 beta, 1 beta' and 1 omega subunit. When a sigma factor is associated with the core the holoenzyme is formed, which can initiate transcription. The cofactor is Mg(2+). Zn(2+) serves as cofactor.

The enzyme catalyses RNA(n) + a ribonucleoside 5'-triphosphate = RNA(n+1) + diphosphate. Its function is as follows. DNA-dependent RNA polymerase catalyzes the transcription of DNA into RNA using the four ribonucleoside triphosphates as substrates. In Clostridium botulinum (strain ATCC 19397 / Type A), this protein is DNA-directed RNA polymerase subunit beta'.